The primary structure comprises 36 residues: Photosystem II reaction center protein M (36 aa).

Residues I5–L25 form a helical membrane-spanning segment.

This sequence belongs to the PsbM family. PSII is composed of 1 copy each of membrane proteins PsbA, PsbB, PsbC, PsbD, PsbE, PsbF, PsbH, PsbI, PsbJ, PsbK, PsbL, PsbM, PsbT, PsbX, PsbY, PsbZ, Psb30/Ycf12, at least 3 peripheral proteins of the oxygen-evolving complex and a large number of cofactors. It forms dimeric complexes.

It is found in the plastid. The protein localises to the chloroplast thylakoid membrane. Its function is as follows. One of the components of the core complex of photosystem II (PSII). PSII is a light-driven water:plastoquinone oxidoreductase that uses light energy to abstract electrons from H(2)O, generating O(2) and a proton gradient subsequently used for ATP formation. It consists of a core antenna complex that captures photons, and an electron transfer chain that converts photonic excitation into a charge separation. This subunit is found at the monomer-monomer interface. This Chlorella vulgaris (Green alga) protein is Photosystem II reaction center protein M.